The primary structure comprises 340 residues: tRNA-cytidine(32) 2-sulfurtransferase (340 aa).

A PP-loop motif motif is present at residues Ser74–Ser79. Residues Cys149, Cys152, and Cys240 each contribute to the [4Fe-4S] cluster site.

It belongs to the TtcA family. In terms of assembly, homodimer. Requires Mg(2+) as cofactor. The cofactor is [4Fe-4S] cluster.

It is found in the cytoplasm. It catalyses the reaction cytidine(32) in tRNA + S-sulfanyl-L-cysteinyl-[cysteine desulfurase] + AH2 + ATP = 2-thiocytidine(32) in tRNA + L-cysteinyl-[cysteine desulfurase] + A + AMP + diphosphate + H(+). It participates in tRNA modification. Functionally, catalyzes the ATP-dependent 2-thiolation of cytidine in position 32 of tRNA, to form 2-thiocytidine (s(2)C32). The sulfur atoms are provided by the cysteine/cysteine desulfurase (IscS) system. This is tRNA-cytidine(32) 2-sulfurtransferase from Burkholderia ambifaria (strain MC40-6).